The primary structure comprises 439 residues: uncharacterized protein (439 aa).

Disordered regions lie at residues 1-36 (MRPG…SKQA), 126-157 (SRTG…GVPI), and 411-439 (FRSD…AVPR).

This is an uncharacterized protein from Streptomyces fradiae (Streptomyces roseoflavus).